The following is a 70-amino-acid chain: Large ribosomal subunit protein bL31 (70 aa).

Residues cysteine 16, cysteine 18, cysteine 37, and cysteine 40 each contribute to the Zn(2+) site. The disordered stretch occupies residues 48 to 70 (QRQASSGGRVDKFNKRFGALGSK).

The protein belongs to the bacterial ribosomal protein bL31 family. Type A subfamily. In terms of assembly, part of the 50S ribosomal subunit. Requires Zn(2+) as cofactor.

Functionally, binds the 23S rRNA. This is Large ribosomal subunit protein bL31 from Photobacterium profundum (strain SS9).